The following is a 237-amino-acid chain: 2,3,4,5-tetrahydropyridine-2,6-dicarboxylate N-acetyltransferase (237 aa).

It belongs to the transferase hexapeptide repeat family. DapH subfamily.

It carries out the reaction (S)-2,3,4,5-tetrahydrodipicolinate + acetyl-CoA + H2O = L-2-acetamido-6-oxoheptanedioate + CoA. It participates in amino-acid biosynthesis; L-lysine biosynthesis via DAP pathway; LL-2,6-diaminopimelate from (S)-tetrahydrodipicolinate (acetylase route): step 1/3. Catalyzes the transfer of an acetyl group from acetyl-CoA to tetrahydrodipicolinate. This is 2,3,4,5-tetrahydropyridine-2,6-dicarboxylate N-acetyltransferase from Limosilactobacillus fermentum (strain NBRC 3956 / LMG 18251) (Lactobacillus fermentum).